We begin with the raw amino-acid sequence, 541 residues long: Carotenoid-cleaving dioxygenase, mitochondrial (541 aa).

Residues H188, H248, H319, and H535 each contribute to the Fe cation site.

The protein belongs to the carotenoid oxygenase family. Fe(2+) is required as a cofactor. In terms of tissue distribution, widely expressed. Detected in heart, spleen, lung, intestine, colon, stomach, kidney, bladder, and prostate. Highly expressed in liver and testis (at protein level).

It localises to the mitochondrion. It catalyses the reaction all-trans-beta-carotene + O2 = beta-ionone + all-trans-10'-apo-beta-carotenal. The enzyme catalyses 5-cis-lycopene + O2 = 5-cis-10'-apo-lycopenal + (3E,5E)-6,10-dimethylundeca-3,5,9-trien-2-one. It carries out the reaction 13-cis-lycopene + O2 = 13-cis-10'-apo-lycopenal + (3E,5E)-6,10-dimethylundeca-3,5,9-trien-2-one. The catalysed reaction is lutein + O2 = (3R,6R)-hydroxy-alpha-ionone + (3R)-3-hydroxy-10'-apo-beta-carotenal. It catalyses the reaction lutein + O2 = (3R,6R)-3-hydroxy-10'-apo-alpha-carotenal + (3R)-hydroxy-beta-ionone. The enzyme catalyses all-trans-zeaxanthin + 2 O2 = 4,9-dimethyldodeca-2,4,6,8,10-pentaenedial + 2 (3R)-hydroxy-beta-ionone. It carries out the reaction all-trans-zeaxanthin + O2 = (3R)-3-hydroxy-10'-apo-beta-carotenal + (3R)-hydroxy-beta-ionone. The catalysed reaction is beta-cryptoxanthin + O2 = all-trans-10'-apo-beta-carotenal + (3R)-hydroxy-beta-ionone. It catalyses the reaction all-trans-10'-apo-beta-carotenal + O2 = beta-ionone + 4,9-dimethyldodeca-2,4,6,8,10-pentaenedial. The enzyme catalyses (3R)-3-hydroxy-10'-apo-beta-carotenal + O2 = 4,9-dimethyldodeca-2,4,6,8,10-pentaenedial + (3R)-hydroxy-beta-ionone. It carries out the reaction (3R,6R)-3-hydroxy-10'-apo-alpha-carotenal + O2 = (3R,6R)-hydroxy-alpha-ionone + 4,9-dimethyldodeca-2,4,6,8,10-pentaenedial. In terms of biological role, broad specificity mitochondrial dioxygenase that mediates the asymmetric oxidative cleavage of carotenoids. Cleaves carotenes (pure hydrocarbon carotenoids) such as all-trans-beta-carotene and lycopene as well as xanthophylls (oxygenated carotenoids) such as zeaxanthin, lutein and beta-cryptoxanthin at both the 9,10 and the 9',10' carbon-carbon double bond. Through its function in carotenoids metabolism regulates oxidative stress and the production of important signaling molecules. This Mustela putorius furo (European domestic ferret) protein is Carotenoid-cleaving dioxygenase, mitochondrial.